Consider the following 398-residue polypeptide: Galactose-3-O-sulfotransferase 2 (398 aa).

Residues 1–11 (MLSALGGLQRC) lie on the Cytoplasmic side of the membrane. The helical; Signal-anchor for type II membrane protein transmembrane segment at 12–29 (FWAILLLALTVSLLAGFL) threads the bilayer. The Lumenal segment spans residues 30–398 (HKDVRLLMPL…PPKNIPFLGA (369 aa)). 6 N-linked (GlcNAc...) asparagine glycosylation sites follow: asparagine 77, asparagine 133, asparagine 180, asparagine 288, asparagine 330, and asparagine 360.

The protein belongs to the galactose-3-O-sulfotransferase family.

The protein resides in the golgi apparatus. Its subcellular location is the golgi stack membrane. It functions in the pathway protein modification; carbohydrate sulfation. With respect to regulation, strongly inhibited by Cu(2+) and Zn(2+). Transfers a sulfate group to the hydroxyl group at C3 of non-reducing beta-galactosyl residues. Acts both on type 1 (Gal-beta-1,3-GlcNAc) and type 2 (Gal-beta-1,4-GlcNAc) chains with similar efficiency. In Sus scrofa (Pig), this protein is Galactose-3-O-sulfotransferase 2 (GAL3ST2).